Consider the following 349-residue polypeptide: uncharacterized protein (349 aa).

Ser2 carries the post-translational modification Phosphoserine.

This is an uncharacterized protein from Saccharomyces cerevisiae (strain ATCC 204508 / S288c) (Baker's yeast).